A 127-amino-acid chain; its full sequence is Large ribosomal subunit protein bL17 (127 aa).

The protein belongs to the bacterial ribosomal protein bL17 family. Part of the 50S ribosomal subunit. Contacts protein L32.

The polypeptide is Large ribosomal subunit protein bL17 (Aeromonas hydrophila subsp. hydrophila (strain ATCC 7966 / DSM 30187 / BCRC 13018 / CCUG 14551 / JCM 1027 / KCTC 2358 / NCIMB 9240 / NCTC 8049)).